The sequence spans 233 residues: Lipoprotein-releasing system ATP-binding protein LolD (233 aa).

In terms of domain architecture, ABC transporter spans Leu-6–Glu-233. ATP is bound at residue Gly-42–Ser-49.

This sequence belongs to the ABC transporter superfamily. Lipoprotein translocase (TC 3.A.1.125) family. As to quaternary structure, the complex is composed of two ATP-binding proteins (LolD) and two transmembrane proteins (LolC and LolE).

The protein localises to the cell inner membrane. Its function is as follows. Part of the ABC transporter complex LolCDE involved in the translocation of mature outer membrane-directed lipoproteins, from the inner membrane to the periplasmic chaperone, LolA. Responsible for the formation of the LolA-lipoprotein complex in an ATP-dependent manner. The chain is Lipoprotein-releasing system ATP-binding protein LolD from Shigella flexneri.